The primary structure comprises 59 residues: Large ribosomal subunit protein uL30 (59 aa).

The protein belongs to the universal ribosomal protein uL30 family. Part of the 50S ribosomal subunit.

This Leptospira interrogans serogroup Icterohaemorrhagiae serovar copenhageni (strain Fiocruz L1-130) protein is Large ribosomal subunit protein uL30.